The chain runs to 103 residues: Large ribosomal subunit protein bL21 (103 aa).

The protein belongs to the bacterial ribosomal protein bL21 family. As to quaternary structure, part of the 50S ribosomal subunit. Contacts protein L20.

Functionally, this protein binds to 23S rRNA in the presence of protein L20. This Bordetella parapertussis (strain 12822 / ATCC BAA-587 / NCTC 13253) protein is Large ribosomal subunit protein bL21.